Here is a 509-residue protein sequence, read N- to C-terminus: Histone deacetylase 2 (509 aa).

The tract at residues 24 to 338 (RRVCYFYDPE…WCYETGVALG (315 aa)) is histone deacetylase. His-158 functions as the Proton donor/acceptor in the catalytic mechanism. Residues Asp-193, His-195, and Asp-281 each contribute to the Zn(2+) site. The tract at residues 394 to 509 (PSVQFEERIP…NAKNEPGSSL (116 aa)) is disordered. Basic and acidic residues-rich tracts occupy residues 398–409 (FEERIPETKLPE), 418–434 (DERH…DHKP), and 448–472 (VKRE…HKVP). Residues 481 to 494 (SSKQVPTADANSMA) show a composition bias toward polar residues.

The protein belongs to the histone deacetylase family. HD Type 1 subfamily. The cofactor is Zn(2+). As to expression, expressed in roots.

The protein resides in the nucleus. The catalysed reaction is N(6)-acetyl-L-lysyl-[histone] + H2O = L-lysyl-[histone] + acetate. Functionally, responsible for the deacetylation of lysine residues on the N-terminal part of the core histones (H2A, H2B, H3 and H4). Histone deacetylation gives a tag for epigenetic repression and plays an important role in transcriptional regulation, cell cycle progression and developmental events. Histone deacetylases act via the formation of large multiprotein complexes. The protein is Histone deacetylase 2 of Oryza sativa subsp. japonica (Rice).